The primary structure comprises 201 residues: Probable molybdenum cofactor guanylyltransferase (201 aa).

GTP contacts are provided by residues 16-18, lysine 28, aspartate 75, and aspartate 107; that span reads LAG. Mg(2+) is bound at residue aspartate 107.

Belongs to the MobA family. Mg(2+) is required as a cofactor.

The protein resides in the cytoplasm. It carries out the reaction Mo-molybdopterin + GTP + H(+) = Mo-molybdopterin guanine dinucleotide + diphosphate. In terms of biological role, transfers a GMP moiety from GTP to Mo-molybdopterin (Mo-MPT) cofactor (Moco or molybdenum cofactor) to form Mo-molybdopterin guanine dinucleotide (Mo-MGD) cofactor. This chain is Probable molybdenum cofactor guanylyltransferase, found in Mycobacterium bovis (strain ATCC BAA-935 / AF2122/97).